The sequence spans 694 residues: MSDQEFDLSKIRNIGIMAHIDAGKTTTTERILYYAGRTHKIGEVHEGGATMDWMEQEQERGITITSAATTVFWLDCKINIIDTPGHVDFTIEVERSLRVLDGAVAVFDAVSGVEPQSETVWRQANKYGVPRIAFVNKMDRMGADYFAAVESMKEKLGANAVAVHCPIGSESQFVGMVDLISQKALYFLDETLGAKWEEREIPEELKEKCAELRYALLEELATIDESNEAFMEKVLEDPDSITEDEIHAVMRKGVIENKINPVLCGTAFKNKGVQQLLNVIVKWLPSPKDRGTIHGISLKNNAEISLEPRKDGPLAALAFKIMTDPYVGRITFIRIYSGTLKKGSAILNSTKDKKERISRLLEMHANERTDRDEFTVGDIGACVGLKFSVTGDTLCDENQEIVLERIEIPEPVIDMAIEPKSKGDREKLAQALNALSEEDPTFRVTSNEETGQTIISGMGELHLDILRDRMIREFKVEANVGKPQVSYKETITKNGASETKYVKQSGGRGQYAHVCLEIEPNEPGKGNEVVSKIVGGVIPKEYIPAVIKGVEEGLNSGVLAGYGLVDVKVNIVFGSYHEVDSSEMAFKICGSMAVKEACRKAAPIILEPIMKIAVITPEDHLGDVIGDLNRRRGKILGQESSRGMAQVNAEVPLSEMFGYTTSLRSLTSGRATSTMEPAFFAKVPQKIQEEIVKK.

The tr-type G domain occupies 9-288; sequence SKIRNIGIMA…VIVKWLPSPK (280 aa). GTP-binding positions include 18–25, 82–86, and 136–139; these read AHIDAGKT, DTPGH, and NKMD.

Belongs to the TRAFAC class translation factor GTPase superfamily. Classic translation factor GTPase family. EF-G/EF-2 subfamily.

The protein localises to the cytoplasm. Catalyzes the GTP-dependent ribosomal translocation step during translation elongation. During this step, the ribosome changes from the pre-translocational (PRE) to the post-translocational (POST) state as the newly formed A-site-bound peptidyl-tRNA and P-site-bound deacylated tRNA move to the P and E sites, respectively. Catalyzes the coordinated movement of the two tRNA molecules, the mRNA and conformational changes in the ribosome. In Chlamydia felis (strain Fe/C-56) (Chlamydophila felis), this protein is Elongation factor G.